The primary structure comprises 623 residues: Arginine decarboxylase 2 (623 aa).

N6-(pyridoxal phosphate)lysine is present on Lys109. Residue 295–305 (LDCGGGLGVDY) coordinates substrate.

The protein belongs to the Orn/Lys/Arg decarboxylase class-II family. SpeA subfamily. The cofactor is pyridoxal 5'-phosphate. Mg(2+) is required as a cofactor. As to expression, expressed in stems (at protein level).

The enzyme catalyses L-arginine + H(+) = agmatine + CO2. It functions in the pathway amine and polyamine biosynthesis; agmatine biosynthesis; agmatine from L-arginine: step 1/1. The protein is Arginine decarboxylase 2 (ADC2) of Oryza sativa subsp. japonica (Rice).